The primary structure comprises 1096 residues: DNA-directed RNA polymerase subunit beta (1096 aa).

It belongs to the RNA polymerase beta chain family. In terms of assembly, in plastids the minimal PEP RNA polymerase catalytic core is composed of four subunits: alpha, beta, beta', and beta''. When a (nuclear-encoded) sigma factor is associated with the core the holoenzyme is formed, which can initiate transcription.

It localises to the plastid. It is found in the chloroplast. The enzyme catalyses RNA(n) + a ribonucleoside 5'-triphosphate = RNA(n+1) + diphosphate. In terms of biological role, DNA-dependent RNA polymerase catalyzes the transcription of DNA into RNA using the four ribonucleoside triphosphates as substrates. The sequence is that of DNA-directed RNA polymerase subunit beta from Guillardia theta (Cryptophyte).